The following is a 639-amino-acid chain: 3-hydroxybenzoate 4-monooxygenase (639 aa).

FAD is bound by residues Asp-34 to Gln-64, Gln-73, Val-166, Asn-212, Arg-269 to Tyr-271, Tyr-317, Asp-349, and Ser-365.

Belongs to the PheA/TfdB FAD monooxygenase family. In terms of assembly, homodimer. Requires FAD as cofactor.

It catalyses the reaction 3-hydroxybenzoate + NADPH + O2 + H(+) = 3,4-dihydroxybenzoate + NADP(+) + H2O. In terms of biological role, converts 3-hydroxybenzoate (m-hydroxybenzoate), and to a lesser extent p-hydroxybenzoate, to 3,4-dihydroxybenzoate (protocatechuate). Also acts on a number of analogs of 3-hydroxybenzoate substituted in the 2, 4, 5 and 6 positions. The polypeptide is 3-hydroxybenzoate 4-monooxygenase (mobA) (Comamonas testosteroni (Pseudomonas testosteroni)).